Here is a 152-residue protein sequence, read N- to C-terminus: Superoxide dismutase [Cu-Zn] (152 aa).

C7 carries S-palmitoyl cysteine lipidation. The Cu cation site is built by H47, H49, and H64. A disulfide bond links C58 and C146. Positions 64, 72, 81, and 84 each coordinate Zn(2+). Position 120 (H120) interacts with Cu cation.

This sequence belongs to the Cu-Zn superoxide dismutase family. In terms of assembly, homodimer. The cofactor is Cu cation. Zn(2+) is required as a cofactor.

The protein resides in the cytoplasm. It is found in the nucleus. The enzyme catalyses 2 superoxide + 2 H(+) = H2O2 + O2. Destroys radicals which are normally produced within the cells and which are toxic to biological systems. The sequence is that of Superoxide dismutase [Cu-Zn] (sod1) from Xiphias gladius (Swordfish).